The primary structure comprises 386 residues: Alanine racemase (386 aa).

Lys48 acts as the Proton acceptor; specific for D-alanine in catalysis. Lys48 is modified (N6-(pyridoxal phosphate)lysine). Arg149 contributes to the substrate binding site. Catalysis depends on Tyr278, which acts as the Proton acceptor; specific for L-alanine. Position 326 (Met326) interacts with substrate.

The protein belongs to the alanine racemase family. The cofactor is pyridoxal 5'-phosphate.

The catalysed reaction is L-alanine = D-alanine. Its pathway is amino-acid biosynthesis; D-alanine biosynthesis; D-alanine from L-alanine: step 1/1. Its function is as follows. Catalyzes the interconversion of L-alanine and D-alanine. May also act on other amino acids. This Nostoc sp. (strain PCC 7120 / SAG 25.82 / UTEX 2576) protein is Alanine racemase (alr).